We begin with the raw amino-acid sequence, 619 residues long: Dihydroxy-acid dehydratase (619 aa).

Residue Asp81 coordinates Mg(2+). Residue Cys122 coordinates [2Fe-2S] cluster. The Mg(2+) site is built by Asp123 and Lys124. Lys124 is modified (N6-carboxylysine). Residue Cys195 coordinates [2Fe-2S] cluster. Glu494 contacts Mg(2+). Ser520 functions as the Proton acceptor in the catalytic mechanism.

Belongs to the IlvD/Edd family. In terms of assembly, homodimer. [2Fe-2S] cluster serves as cofactor. The cofactor is Mg(2+).

The catalysed reaction is (2R)-2,3-dihydroxy-3-methylbutanoate = 3-methyl-2-oxobutanoate + H2O. It catalyses the reaction (2R,3R)-2,3-dihydroxy-3-methylpentanoate = (S)-3-methyl-2-oxopentanoate + H2O. It functions in the pathway amino-acid biosynthesis; L-isoleucine biosynthesis; L-isoleucine from 2-oxobutanoate: step 3/4. Its pathway is amino-acid biosynthesis; L-valine biosynthesis; L-valine from pyruvate: step 3/4. Functions in the biosynthesis of branched-chain amino acids. Catalyzes the dehydration of (2R,3R)-2,3-dihydroxy-3-methylpentanoate (2,3-dihydroxy-3-methylvalerate) into 2-oxo-3-methylpentanoate (2-oxo-3-methylvalerate) and of (2R)-2,3-dihydroxy-3-methylbutanoate (2,3-dihydroxyisovalerate) into 2-oxo-3-methylbutanoate (2-oxoisovalerate), the penultimate precursor to L-isoleucine and L-valine, respectively. The sequence is that of Dihydroxy-acid dehydratase from Shewanella sp. (strain MR-4).